The sequence spans 124 residues: Small ribosomal subunit protein bS16 (124 aa).

Residues 84 to 110 (EKAERKNLKKGEPGKAAKERAEKRAAR) are compositionally biased toward basic and acidic residues. A disordered region spans residues 84-124 (EKAERKNLKKGEPGKAAKERAEKRAAREAAANAPAEEAASE). Residues 111–124 (EAAANAPAEEAASE) are compositionally biased toward low complexity.

The protein belongs to the bacterial ribosomal protein bS16 family.

The protein is Small ribosomal subunit protein bS16 of Paracoccus denitrificans (strain Pd 1222).